Reading from the N-terminus, the 77-residue chain is Large ribosomal subunit protein eL20 (77 aa).

The protein belongs to the eukaryotic ribosomal protein eL20 family. Part of the 50S ribosomal subunit. Binds 23S rRNA.

The protein is Large ribosomal subunit protein eL20 of Thermococcus kodakarensis (strain ATCC BAA-918 / JCM 12380 / KOD1) (Pyrococcus kodakaraensis (strain KOD1)).